The following is a 466-amino-acid chain: Citrate synthase, mitochondrial (466 aa).

Residues 1 to 27 (MALLTAAARLLGTKNASCLVLAARHAS) constitute a mitochondrion transit peptide. An SIFI-degron motif is present at residues 2 to 21 (ALLTAAARLLGTKNASCLVL). K57 carries the post-translational modification N6-succinyllysine. K76 is modified (N6-acetyllysine; alternate). Position 76 is an N6-succinyllysine; alternate (K76). Residues K103 and K193 each carry the N6-succinyllysine modification. H301 is a catalytic residue. An N6-acetyllysine; alternate mark is found at K321 and K327. Residues K321 and K327 each carry the N6-succinyllysine; alternate modification. The active site involves H347. An oxaloacetate-binding site is contributed by R356. K375 carries the post-translational modification N6-acetyllysine; alternate. K375 is subject to N6-succinyllysine; alternate. Position 382 is an N6-acetyllysine (K382). The residue at position 393 (K393) is an N6-acetyllysine; alternate. K393 carries the post-translational modification N6-succinyllysine; alternate. An N6,N6,N6-trimethyllysine modification is found at K395. The active site involves D402. Oxaloacetate-binding residues include R428 and R448. K450 carries the post-translational modification N6-succinyllysine. K459 carries the post-translational modification N6-acetyllysine; alternate. At K459 the chain carries N6-succinyllysine; alternate.

This sequence belongs to the citrate synthase family. As to quaternary structure, homodimer. In terms of processing, methylated. Trimethylation at Lys-395 by CSKMT decreases citrate synthase activity. Post-translationally, in response to mitochondrial stress, the precursor protein is ubiquitinated by the SIFI complex in the cytoplasm before mitochondrial import, leading to its degradation. Within the SIFI complex, UBR4 initiates ubiquitin chain that are further elongated or branched by KCMF1.

The protein resides in the mitochondrion matrix. The catalysed reaction is oxaloacetate + acetyl-CoA + H2O = citrate + CoA + H(+). The protein operates within carbohydrate metabolism; tricarboxylic acid cycle; isocitrate from oxaloacetate: step 1/2. In terms of biological role, key enzyme of the Krebs tricarboxylic acid cycle which catalyzes the synthesis of citrate from acetyl coenzyme A and oxaloacetate. The polypeptide is Citrate synthase, mitochondrial (CS) (Macaca fascicularis (Crab-eating macaque)).